A 602-amino-acid chain; its full sequence is NADH-quinone oxidoreductase subunit C/D (602 aa).

Residues 1–192 (MVNNMTDLTA…DPFELTKAKQ (192 aa)) form an NADH dehydrogenase I subunit C region. Residues 216–602 (DFMFLNLGPN…IDFVMSDVDR (387 aa)) are NADH dehydrogenase I subunit D.

The protein in the N-terminal section; belongs to the complex I 30 kDa subunit family. It in the C-terminal section; belongs to the complex I 49 kDa subunit family. In terms of assembly, NDH-1 is composed of 13 different subunits. Subunits NuoB, CD, E, F, and G constitute the peripheral sector of the complex.

The protein resides in the cell inner membrane. It carries out the reaction a quinone + NADH + 5 H(+)(in) = a quinol + NAD(+) + 4 H(+)(out). NDH-1 shuttles electrons from NADH, via FMN and iron-sulfur (Fe-S) centers, to quinones in the respiratory chain. The immediate electron acceptor for the enzyme in this species is believed to be ubiquinone. Couples the redox reaction to proton translocation (for every two electrons transferred, four hydrogen ions are translocated across the cytoplasmic membrane), and thus conserves the redox energy in a proton gradient. This Klebsiella pneumoniae subsp. pneumoniae (strain ATCC 700721 / MGH 78578) protein is NADH-quinone oxidoreductase subunit C/D.